Reading from the N-terminus, the 422-residue chain is Trichothecene biosynthesis transcription regulator TRI10 (422 aa).

This sequence belongs to the TRI10 transcription regulator family.

It is found in the nucleus. Transcriptional activator of all of the trichothecene biosynthesis genes. Acts upstream of the cluster-encoded transcription factor TRI6 and is necessary for full expression of both the other trichothecene genes and the genes for the primary metabolic pathway that precedes the trichothecene biosynthetic pathway. The sequence is that of Trichothecene biosynthesis transcription regulator TRI10 from Trichoderma arundinaceum.